A 475-amino-acid chain; its full sequence is Ribulose bisphosphate carboxylase large chain (475 aa).

Positions 1-2 are excised as a propeptide; it reads MS. Pro3 carries the post-translational modification N-acetylproline. The residue at position 14 (Lys14) is an N6,N6,N6-trimethyllysine. Positions 123 and 173 each coordinate substrate. The active-site Proton acceptor is Lys175. Lys177 contacts substrate. Residues Lys201, Asp203, and Glu204 each contribute to the Mg(2+) site. The residue at position 201 (Lys201) is an N6-carboxylysine. Catalysis depends on His294, which acts as the Proton acceptor. Arg295, His327, and Ser379 together coordinate substrate.

The protein belongs to the RuBisCO large chain family. Type I subfamily. As to quaternary structure, heterohexadecamer of 8 large chains and 8 small chains; disulfide-linked. The disulfide link is formed within the large subunit homodimers. Mg(2+) serves as cofactor. The disulfide bond which can form in the large chain dimeric partners within the hexadecamer appears to be associated with oxidative stress and protein turnover.

Its subcellular location is the plastid. It localises to the chloroplast. The catalysed reaction is 2 (2R)-3-phosphoglycerate + 2 H(+) = D-ribulose 1,5-bisphosphate + CO2 + H2O. It carries out the reaction D-ribulose 1,5-bisphosphate + O2 = 2-phosphoglycolate + (2R)-3-phosphoglycerate + 2 H(+). In terms of biological role, ruBisCO catalyzes two reactions: the carboxylation of D-ribulose 1,5-bisphosphate, the primary event in carbon dioxide fixation, as well as the oxidative fragmentation of the pentose substrate in the photorespiration process. Both reactions occur simultaneously and in competition at the same active site. The protein is Ribulose bisphosphate carboxylase large chain of Picea abies (Norway spruce).